The following is a 227-amino-acid chain: Triosephosphate isomerase (227 aa).

N6 to K8 lines the substrate pocket. H85 (electrophile) is an active-site residue. Catalysis depends on E152, which acts as the Proton acceptor. Residues G158 and S188 each coordinate substrate.

It belongs to the triosephosphate isomerase family. In terms of assembly, homodimer.

The protein localises to the cytoplasm. It catalyses the reaction D-glyceraldehyde 3-phosphate = dihydroxyacetone phosphate. The protein operates within carbohydrate biosynthesis; gluconeogenesis. It participates in carbohydrate degradation; glycolysis; D-glyceraldehyde 3-phosphate from glycerone phosphate: step 1/1. Functionally, involved in the gluconeogenesis. Catalyzes stereospecifically the conversion of dihydroxyacetone phosphate (DHAP) to D-glyceraldehyde-3-phosphate (G3P). This Campylobacter concisus (strain 13826) protein is Triosephosphate isomerase.